A 429-amino-acid polypeptide reads, in one-letter code: Adenylosuccinate synthetase (429 aa).

GTP-binding positions include 12 to 18 (GDEGKGK) and 40 to 42 (GHT). The active-site Proton acceptor is aspartate 13. The Mg(2+) site is built by aspartate 13 and glycine 40. IMP contacts are provided by residues 13–16 (DEGK), 38–41 (NAGH), threonine 129, arginine 143, glutamine 223, threonine 238, and arginine 302. Histidine 41 (proton donor) is an active-site residue. Residue 298-304 (VVTGRKR) coordinates substrate. GTP contacts are provided by residues arginine 304, 330 to 332 (KLD), and 412 to 414 (STS).

The protein belongs to the adenylosuccinate synthetase family. In terms of assembly, homodimer. It depends on Mg(2+) as a cofactor.

The protein localises to the cytoplasm. The enzyme catalyses IMP + L-aspartate + GTP = N(6)-(1,2-dicarboxyethyl)-AMP + GDP + phosphate + 2 H(+). It functions in the pathway purine metabolism; AMP biosynthesis via de novo pathway; AMP from IMP: step 1/2. In terms of biological role, plays an important role in the de novo pathway of purine nucleotide biosynthesis. Catalyzes the first committed step in the biosynthesis of AMP from IMP. In Bartonella tribocorum (strain CIP 105476 / IBS 506), this protein is Adenylosuccinate synthetase.